The chain runs to 333 residues: Glycerol-3-phosphate dehydrogenase [NAD(P)+] (333 aa).

Residues serine 10, tryptophan 11, and lysine 105 each coordinate NADPH. 3 residues coordinate sn-glycerol 3-phosphate: lysine 105, glycine 136, and threonine 138. Alanine 140 serves as a coordination point for NADPH. 5 residues coordinate sn-glycerol 3-phosphate: lysine 191, aspartate 244, serine 254, arginine 255, and asparagine 256. The active-site Proton acceptor is lysine 191. Arginine 255 lines the NADPH pocket. Valine 279 and glutamate 281 together coordinate NADPH.

Belongs to the NAD-dependent glycerol-3-phosphate dehydrogenase family.

The protein localises to the cytoplasm. The enzyme catalyses sn-glycerol 3-phosphate + NAD(+) = dihydroxyacetone phosphate + NADH + H(+). It catalyses the reaction sn-glycerol 3-phosphate + NADP(+) = dihydroxyacetone phosphate + NADPH + H(+). It functions in the pathway membrane lipid metabolism; glycerophospholipid metabolism. Its function is as follows. Catalyzes the reduction of the glycolytic intermediate dihydroxyacetone phosphate (DHAP) to sn-glycerol 3-phosphate (G3P), the key precursor for phospholipid synthesis. The chain is Glycerol-3-phosphate dehydrogenase [NAD(P)+] from Syntrophotalea carbinolica (strain DSM 2380 / NBRC 103641 / GraBd1) (Pelobacter carbinolicus).